A 978-amino-acid polypeptide reads, in one-letter code: Mineralocorticoid receptor (978 aa).

The segment at 1-602 (METKGYHSLP…STGSSRPSKI (602 aa)) is modulating. Over residues 234–243 (SLTCSPSVEN) the composition is skewed to polar residues. Disordered stretches follow at residues 234–331 (SLTC…STVG) and 353–372 (GAIQ…AHDV). S250, S259, S283, S287, and S299 each carry phosphoserine. Residues 259-300 (SPLSSPLSSMKSPISSPPSHCSVKSPVSSPNNVPLRSSVSSP) show a composition bias toward low complexity. Over residues 301 to 331 (ANLNNSRCSVSSPSNTNNRSTLSSPTASTVG) the composition is skewed to polar residues. 8 residues coordinate Zn(2+): C603, C606, C620, C623, C637, C643, C653, and C656. 2 NR C4-type zinc fingers span residues 603–623 (CLVC…CGSC) and 637–661 (CAGR…LQKC). A DNA-binding region (nuclear receptor) is located at residues 603–666 (CLVCGDEASG…RLQKCLQAGM (64 aa)). The interval 667-719 (NLGARKSKKLGKLKGLHEEQPQQPPPPPPQSPEEGTTYIAPTKEPSVNSALVP) is hinge. The disordered stretch occupies residues 681-706 (GLHEEQPQQPPPPPPQSPEEGTTYIA). The segment covering 688 to 697 (QQPPPPPPQS) has biased composition (pro residues). Positions 720–958 (QLASITRALT…EFPAMLVEII (239 aa)) constitute an NR LBD domain. 2 residues coordinate 21-hydroxyprogesterone: N764 and Q770. 2 residues coordinate aldosterone: N764 and Q770. Progesterone is bound by residues N764 and Q770. The important for coactivator binding stretch occupies residues 776 to 779 (KWAK). 21-hydroxyprogesterone is bound by residues R811 and T939. Aldosterone contacts are provided by R811 and T939. Progesterone is bound by residues R811 and T939.

The protein belongs to the nuclear hormone receptor family. NR3 subfamily. Heteromultimeric cytoplasmic complex with HSP90, HSP70, and FKBP4, in the absence of ligand. After ligand binding, it translocates to the nucleus and binds to DNA as a homodimer and as a heterodimer with NR3C1. Binds the coactivator NCOA2. May interact with HSD11B2 in the absence of ligand. Binds the coactivators NCOA1, TIF1 and NRIP1. In terms of processing, phosphorylated. As to expression, expressed in heart and kidney.

The protein localises to the cytoplasm. Its subcellular location is the nucleus. It localises to the endoplasmic reticulum membrane. Its function is as follows. Receptor for both mineralocorticoids (MC) such as aldosterone and glucocorticoids (GC) such as corticosterone or cortisol. Binds to mineralocorticoid response elements (MRE) and transactivates target genes. The effect of MC is to increase ion and water transport and thus raise extracellular fluid volume and blood pressure and lower potassium levels. This chain is Mineralocorticoid receptor (Nr3c2), found in Mus musculus (Mouse).